A 382-amino-acid chain; its full sequence is Neuropeptide Y receptor type 1 (382 aa).

Residues 1–33 lie on the Extracellular side of the membrane; the sequence is MNSTSFSQVENHSIFCNFSENSQFLAFESDDCH. 3 N-linked (GlcNAc...) asparagine glycosylation sites follow: asparagine 2, asparagine 11, and asparagine 17. The helical transmembrane segment at 34–54 threads the bilayer; it reads LPLAMIFTLALAYGAVIILGV. The Cytoplasmic portion of the chain corresponds to 55 to 75; the sequence is TGNLALIMIILKQKEMRNVTN. A helical membrane pass occupies residues 76 to 96; it reads ILIVNLSFSDLLVAIMCLPFT. The Extracellular portion of the chain corresponds to 97-115; that stretch reads FVYTLMDHWVFGEAMCKLN. The cysteines at positions 112 and 197 are disulfide-linked. Residues 116 to 136 traverse the membrane as a helical segment; that stretch reads PFVQCVSITVSIFSLVLIAVE. Topologically, residues 137-153 are cytoplasmic; that stretch reads RHQLIINPRGWRPNNRH. A helical transmembrane segment spans residues 154-174; sequence AYVGIAVIWVLAVVSSLPFLI. Over 175–210 the chain is Extracellular; that stretch reads YQVLTDEPFQNVTLDAFKDKYVCFDKFPSDSHRLSY. Residue asparagine 185 is glycosylated (N-linked (GlcNAc...) asparagine). A helical transmembrane segment spans residues 211–231; that stretch reads TTLLLMLQYFGPLCFIFICYF. Residues 232 to 259 lie on the Cytoplasmic side of the membrane; the sequence is KIYIRLKRRNNMMDKMRDNKYRSSETKR. Residues 260–280 traverse the membrane as a helical segment; sequence INIMLLSIVVAFAVCWLPLTI. Over 281-298 the chain is Extracellular; the sequence is FNTVFDWNHQIIATCNHN. Residues 299 to 319 form a helical membrane-spanning segment; the sequence is LLFLLCHLTAMISTCVNPIFY. Topologically, residues 320–382 are cytoplasmic; that stretch reads GFLNKNFQRD…KINNDDNEKI (63 aa). Residue cysteine 337 is the site of S-palmitoyl cysteine attachment. Serine 367 is modified (phosphoserine).

It belongs to the G-protein coupled receptor 1 family.

The protein resides in the cell membrane. Receptor for neuropeptide Y and peptide YY. The chain is Neuropeptide Y receptor type 1 (NPY1R) from Canis lupus familiaris (Dog).